The primary structure comprises 283 residues: Urease accessory protein UreD 1 (283 aa).

Belongs to the UreD family. As to quaternary structure, ureD, UreF and UreG form a complex that acts as a GTP-hydrolysis-dependent molecular chaperone, activating the urease apoprotein by helping to assemble the nickel containing metallocenter of UreC. The UreE protein probably delivers the nickel.

Its subcellular location is the cytoplasm. In terms of biological role, required for maturation of urease via the functional incorporation of the urease nickel metallocenter. This chain is Urease accessory protein UreD 1, found in Brucella anthropi (strain ATCC 49188 / DSM 6882 / CCUG 24695 / JCM 21032 / LMG 3331 / NBRC 15819 / NCTC 12168 / Alc 37) (Ochrobactrum anthropi).